Consider the following 519-residue polypeptide: Exodeoxyribonuclease 7 large subunit (519 aa).

It belongs to the XseA family. In terms of assembly, heterooligomer composed of large and small subunits.

Its subcellular location is the cytoplasm. It carries out the reaction Exonucleolytic cleavage in either 5'- to 3'- or 3'- to 5'-direction to yield nucleoside 5'-phosphates.. Bidirectionally degrades single-stranded DNA into large acid-insoluble oligonucleotides, which are then degraded further into small acid-soluble oligonucleotides. The protein is Exodeoxyribonuclease 7 large subunit of Cereibacter sphaeroides (strain ATCC 17025 / ATH 2.4.3) (Rhodobacter sphaeroides).